An 84-amino-acid polypeptide reads, in one-letter code: TLLLTLVVVTIVCLDLGYTLTCVTDKSFGGVITEECAAGQKICFKNWKKMGPKLYDVKRGCTATCPKADDNGCVKCCNTDKCNK.

A signal peptide spans 1–19 (TLLLTLVVVTIVCLDLGYT). 4 disulfide bridges follow: cysteine 22-cysteine 43, cysteine 36-cysteine 61, cysteine 65-cysteine 76, and cysteine 77-cysteine 82.

Belongs to the three-finger toxin family. Short-chain subfamily. Aminergic toxin sub-subfamily. In terms of assembly, homodimer; disulfide-linked. Expressed by the venom gland.

The protein localises to the secreted. Its function is as follows. This protein shows a synergetic toxic effect in that it enhances the toxicity of other toxins. In Dendroaspis jamesoni jamesoni (Jameson's mamba), this protein is Venom protein SynTx.